The chain runs to 261 residues: UPF0177 protein YvdC (261 aa).

The next 6 helical transmembrane spans lie at 15–35 (WVIV…IFHL), 43–63 (VLSI…VLFI), 84–104 (LDTV…YLIA), 123–143 (IIIG…FAQI), 197–217 (YFAF…TDLY), and 239–259 (FYLN…IALV).

Belongs to the UPF0177 family.

Its subcellular location is the cell membrane. The polypeptide is UPF0177 protein YvdC (yvdC) (Lactococcus lactis subsp. lactis (strain IL1403) (Streptococcus lactis)).